The sequence spans 769 residues: MAIFELFSFDIDKLLVWVSKFSPGKILSAICRLGLDSWNNFRKWFWGLNFDKHEWAVDHFMPLMPRFSSDMDEVAKRIVTPKSKPKLEDCLEIDTAVEECFNEECFEPQEDGSMKLKRVAAPQQIKRVRTGMIEDAISAVEARIRNRHMIMGDDMGLVDEAAVRATAMDICGEYKINEHHTRCIIYAAAYRAMTPDQESIDATKMAYNPKSQARRDLVSILRKNISFGGFKSLEDFLSAPVSFPVEDAPYQILGIPEIKVADKRASRVCKFKRVVGLPSLSAGQSVCVHKTSLHNMIVSLEQRVFRVKNETGEFVVPPQPSKGAFDSISYFREAWKKKLYSKGPVVKSSIDDVVACYSSEKKKLYQKGAATLSHRPLHWRDSKVRAFIKVEKLECDKKAPVPRTIQPRSKRYNLCIGRYLRLNEKRMLDAIDAVFGEKTVLSGLDNKAQGRAIAKKWSKYESPIGIGLDASRFDQHCSKDALKFEHSFYRECFPDDKTSPDLLDWQLENEGSALMPTESLVKYRTRCRMSGDINTGLGNKILMCSMVHAYLKEVGVNASLANNGDDCVLFCEKGDFNRINDSLREWFLCRGFNMVVEEPVECLERVVFCRSQPVCVATKWAMVRQLGSLSRDCFSTQNWLNPTTFRDAMNALGQCNGIINDGVPVHMAQAKRMYAAGGNRKFDLKALHKQMEYSWRDRLGARTNLLWSEVEDSTRLSYFRAFGIEPAVQRIVEGYFSESKISEEGRQTNFLPTHYSRLHKDLLVPRYLN.

Residues 463–579 enclose the RdRp catalytic domain; that stretch reads PIGIGLDASR…FCEKGDFNRI (117 aa).

This sequence belongs to the tombusviridae RNA polymerase family.

The enzyme catalyses RNA(n) + a ribonucleoside 5'-triphosphate = RNA(n+1) + diphosphate. Functionally, probable polymerase. The protein is RNA-directed RNA polymerase of Dianthus barbatus (Carnation).